Here is a 316-residue protein sequence, read N- to C-terminus: Ribosomal RNA small subunit methyltransferase H (316 aa).

S-adenosyl-L-methionine-binding positions include 35-37 (GGH), aspartate 55, phenylalanine 79, aspartate 101, and glutamine 108.

The protein belongs to the methyltransferase superfamily. RsmH family.

The protein resides in the cytoplasm. It catalyses the reaction cytidine(1402) in 16S rRNA + S-adenosyl-L-methionine = N(4)-methylcytidine(1402) in 16S rRNA + S-adenosyl-L-homocysteine + H(+). In terms of biological role, specifically methylates the N4 position of cytidine in position 1402 (C1402) of 16S rRNA. The polypeptide is Ribosomal RNA small subunit methyltransferase H (Vibrio vulnificus (strain CMCP6)).